Reading from the N-terminus, the 726-residue chain is Cyclin-T1 (726 aa).

Phosphoserine is present on S117. A Nuclear localization signal, and interaction with Tat-TAR RNA motif is present at residues 253–270; it reads KRIWNWRACEAAKKTKAD. A Phosphoserine modification is found at S340. A Glycyl lysine isopeptide (Lys-Gly) (interchain with G-Cter in SUMO2) cross-link involves residue K342. Residues 360–385 form a disordered region; sequence VDHSLPQDGSNAFISQKQNSKSVPSA. Residues 366 to 382 show a composition bias toward polar residues; sequence QDGSNAFISQKQNSKSV. The stretch at 384–425 forms a coiled coil; it reads SAKVSLKEYRAKHAEELAAQKRQLENMEANVKSQYAYAAQNL. S388 is modified (phosphoserine). N6-acetyllysine is present on K390. A Glycyl lysine isopeptide (Lys-Gly) (interchain with G-Cter in SUMO2) cross-link involves residue K415. 3 positions are modified to ADP-ribosylserine: S416, S474, and S475. Residues 480–550 form a histidine-rich domain (HRD) region; it reads IKMRIKVHAA…RPGDPKHSSQ (71 aa). Residue K481 forms a Glycyl lysine isopeptide (Lys-Gly) (interchain with G-Cter in SUMO2) linkage. The residue at position 485 (K485) is an N6-(ADP-ribosyl)lysine. H487 bears the ADP-ribosylhistidine mark. Residues 487-506 are compositionally biased toward basic and acidic residues; that stretch reads HAAADKHNSVEDSVTKSREH. 2 disordered regions span residues 487 to 650 and 688 to 726; these read HAAA…NGHN and SDYL…PLPK. Phosphoserine occurs at positions 495 and 499. Basic residues predominate over residues 507–530; it reads KEKHKTHPSNHHHHHNHHSHKHSH. Residues 527 to 570 are required for interaction with ZMYND8; sequence KHSHSQLPVGTGNKRPGDPKHSSQTSNLAHKTYSLSSSFSSSSS. H530 carries the post-translational modification ADP-ribosylhistidine. Residues S531, S549, and S552 each carry the ADP-ribosylserine modification. H556 bears the ADP-ribosylhistidine mark. Residues 560–570 are compositionally biased toward low complexity; the sequence is SLSSSFSSSSS. ADP-ribosylserine is present on S563. Phosphoserine is present on residues S564 and S577. Positions 594–609 are enriched in low complexity; that stretch reads STKSSSLNFSFPSLPT. A compositionally biased stretch (polar residues) spans 615–630; it reads GHSSDTSGLSFSQPSC. S637 carries the ADP-ribosylserine modification. Pro residues predominate over residues 710–726; that stretch reads PPPLPSEPPPPLPPLPK.

Belongs to the cyclin family. Cyclin C subfamily. As to quaternary structure, cyclin-T1 is the predominant cyclin that associates with CDK9 to form a heterodimer called P-TEFb. P-TEFb forms a complex with AFF4/AF5Q31. Component of a complex which is at least composed of HTATSF1/Tat-SF1, P-TEFb complex, RNA pol II, SUPT5H, and NCL/nucleolin. Component of the 7SK snRNP complex at least composed of P-TEFb (composed of CDK9 and CCNT1/cyclin-T1), HEXIM1, HEXIM2, BCDIN3, SART3 proteins and 7SK and U6 snRNAs. Interacts (via central region) with ZMYND8 (via N-terminus); the interaction is direct and the association appears to occur between homodimeric ZMYND8 and the activated form of the P-TEFb complex. Interacts with BRD4, targets chromatin binding. Interacts with JMJD6. Interacts with MDFIC. Interacts with HSF1. Interacts with HTATSF1. Interacts with TBX21. In terms of assembly, (Microbial infection) Interacts with the transactivation region of HIV-1, HIV-2 and SIV Tat. (Microbial infection) Interacts with human herpes virus 1 (HHV-1) transcriptional regulator ICP22. ADP-ribosylation on serine residues by PARP1 in response to DNA damage disrupts the phase separation activity of CCNT1, thereby preventing activation of CDK9. As to expression, ubiquitously expressed.

The protein resides in the nucleus. Functionally, regulatory subunit of the cyclin-dependent kinase pair (CDK9/cyclin-T1) complex, also called positive transcription elongation factor B (P-TEFb), which facilitates the transition from abortive to productive elongation by phosphorylating the CTD (C-terminal domain) of the large subunit of RNA polymerase II (RNA Pol II). Required to activate the protein kinase activity of CDK9: acts by mediating formation of liquid-liquid phase separation (LLPS) that enhances binding of P-TEFb to the CTD of RNA Pol II. Its function is as follows. (Microbial infection) In case of HIV or SIV infections, binds to the transactivation domain of the viral nuclear transcriptional activator, Tat, thereby increasing Tat's affinity for the transactivating response RNA element (TAR RNA). Serves as an essential cofactor for Tat, by promoting RNA Pol II activation, allowing transcription of viral genes. This is Cyclin-T1 (CCNT1) from Homo sapiens (Human).